Here is an 846-residue protein sequence, read N- to C-terminus: Translation initiation factor IF-2 (846 aa).

The disordered stretch occupies residues K199–K219. Over residues S207–K219 the composition is skewed to basic residues. One can recognise a tr-type G domain in the interval S345 to E512. Residues G354–T361 form a G1 region. G354–T361 provides a ligand contact to GTP. The interval G379–H383 is G2. The tract at residues D400–G403 is G3. GTP is bound by residues D400 to H404 and N454 to D457. Positions N454–D457 are G4. A G5 region spans residues S490 to K492.

Belongs to the TRAFAC class translation factor GTPase superfamily. Classic translation factor GTPase family. IF-2 subfamily.

It localises to the cytoplasm. Functionally, one of the essential components for the initiation of protein synthesis. Protects formylmethionyl-tRNA from spontaneous hydrolysis and promotes its binding to the 30S ribosomal subunits. Also involved in the hydrolysis of GTP during the formation of the 70S ribosomal complex. This chain is Translation initiation factor IF-2, found in Francisella tularensis subsp. holarctica (strain LVS).